The chain runs to 920 residues: 3-hydroxy-3-methylglutaryl-coenzyme A reductase (920 aa).

The chain crosses the membrane as a helical span at residues 12–32 (FCASHPWEVIVALLTITACML). A glycan (N-linked (GlcNAc...) asparagine) is linked at N37. Residues 62 to 85 (GAGSGASGTIPPSSMGGSATSSRH) are disordered. The segment covering 71 to 82 (IPPSSMGGSATS) has biased composition (polar residues). Residues 106 to 263 (DVILMTIVRC…MTFYPACLSL (158 aa)) enclose the SSD domain. 5 consecutive transmembrane segments (helical) span residues 107–129 (VILMTIVRCTAVLYCYYQFCSLH), 136–156 (VLGIAGLFTVFSSFIFTTAII), 170–190 (LFFLLLVIDLSNSGRLAQLAL), 208–228 (LLGPAISLDTIVEVLLVGVGT), and 237–257 (VLCMFAVLSVLVNYVVFMTFY). Residues N342 and N346 are each glycosylated (N-linked (GlcNAc...) asparagine). Residues 364 to 384 (SADHIVISIVLIALVVKFICF) traverse the membrane as a helical segment. The segment at 385–498 (DNRDPLPDQL…EEIVSIVHAG (114 aa)) is linker. N-linked (GlcNAc...) asparagine glycans are attached at residues N443 and N475. The segment at 499–829 (GTHCPLHKIE…TCTMPSLEVG (331 aa)) is catalytic. Residues E586, K717, and D793 each act as charge relay system in the active site. 2 N-linked (GlcNAc...) asparagine glycosylation sites follow: N797 and N802. Catalysis depends on H892, which acts as the Proton donor. 2 N-linked (GlcNAc...) asparagine glycosylation sites follow: N896 and N910.

The protein belongs to the HMG-CoA reductase family. Highly expressed in embryonic gonadal mesoderm, where expression is initially broad, and then becomes restricted to a segmental pattern at stage 11. Expression is then further restricted to a cluster of cells in each of parasegments 10, 11 and 12, corresponding to the developing gonadal mesoderm. Not expressed in pole cells.

Its subcellular location is the endoplasmic reticulum membrane. It carries out the reaction (R)-mevalonate + 2 NADP(+) + CoA = (3S)-3-hydroxy-3-methylglutaryl-CoA + 2 NADPH + 2 H(+). Its pathway is metabolic intermediate biosynthesis; (R)-mevalonate biosynthesis; (R)-mevalonate from acetyl-CoA: step 3/3. With respect to regulation, the activity of HMG-CoA-reductase is suppressed by exogenous mevalonate. Its function is as follows. Synthesis of mevalonate for the production of non-sterol isoprenoids, which are essential for growth differentiation. Provides spatial information during embryogenesis to guide migrating primordial germ cells (the pole cells) from the ectoderm to the mesoderm. Also required for association of the pole cells with the gonadal mesoderm. This is 3-hydroxy-3-methylglutaryl-coenzyme A reductase (Hmgcr) from Drosophila melanogaster (Fruit fly).